We begin with the raw amino-acid sequence, 427 residues long: 3-phosphoshikimate 1-carboxyvinyltransferase (427 aa).

3-phosphoshikimate is bound by residues K20, S21, and R25. K20 lines the phosphoenolpyruvate pocket. Phosphoenolpyruvate-binding residues include G92 and R120. Residues S166, Q168, D312, and K339 each contribute to the 3-phosphoshikimate site. Phosphoenolpyruvate is bound at residue Q168. Catalysis depends on D312, which acts as the Proton acceptor. Residues R343 and R385 each coordinate phosphoenolpyruvate.

The protein belongs to the EPSP synthase family. Monomer.

It localises to the cytoplasm. The catalysed reaction is 3-phosphoshikimate + phosphoenolpyruvate = 5-O-(1-carboxyvinyl)-3-phosphoshikimate + phosphate. It participates in metabolic intermediate biosynthesis; chorismate biosynthesis; chorismate from D-erythrose 4-phosphate and phosphoenolpyruvate: step 6/7. Catalyzes the transfer of the enolpyruvyl moiety of phosphoenolpyruvate (PEP) to the 5-hydroxyl of shikimate-3-phosphate (S3P) to produce enolpyruvyl shikimate-3-phosphate and inorganic phosphate. This Streptococcus equi subsp. equi (strain 4047) protein is 3-phosphoshikimate 1-carboxyvinyltransferase.